The chain runs to 327 residues: Protein hunchback (327 aa).

C2H2-type zinc fingers lie at residues 1-5 (HMRNH), 11-33 (FQCSQCSYSCVNKSMLNSHLKSH), and 39-63 (YRCADCNYATKYCHSLKLHLRKYQH). Disordered stretches follow at residues 91–121 (KQKPFSKMFEPQGPVSNNNQPQPPAPTHPIF), 143–170 (PPNNNYEQRTSPKNHEIQTEKPQQMSPP), and 182–290 (ERPL…EVAS). Basic and acidic residues-rich tracts occupy residues 205–216 (THREMPTEHGDD) and 265–276 (LQHEDEKMRDAD). C2H2-type zinc fingers lie at residues 297–319 (YTCQFCDITFGDLTMHTIHMGFH) and 325–327 (FMC).

This sequence belongs to the hunchback C2H2-type zinc-finger protein family.

It is found in the nucleus. Its function is as follows. Gap class segmentation protein that controls development of head structures. This chain is Protein hunchback (hb), found in Manduca sexta (Tobacco hawkmoth).